The following is a 333-amino-acid chain: Phosphoribosylformylglycinamidine cyclo-ligase (333 aa).

The protein belongs to the AIR synthase family.

It localises to the cytoplasm. The enzyme catalyses 2-formamido-N(1)-(5-O-phospho-beta-D-ribosyl)acetamidine + ATP = 5-amino-1-(5-phospho-beta-D-ribosyl)imidazole + ADP + phosphate + H(+). Its pathway is purine metabolism; IMP biosynthesis via de novo pathway; 5-amino-1-(5-phospho-D-ribosyl)imidazole from N(2)-formyl-N(1)-(5-phospho-D-ribosyl)glycinamide: step 2/2. The polypeptide is Phosphoribosylformylglycinamidine cyclo-ligase (Clostridium perfringens (strain ATCC 13124 / DSM 756 / JCM 1290 / NCIMB 6125 / NCTC 8237 / Type A)).